The chain runs to 202 residues: Imidazoleglycerol-phosphate dehydratase (202 aa).

The protein belongs to the imidazoleglycerol-phosphate dehydratase family.

Its subcellular location is the cytoplasm. It catalyses the reaction D-erythro-1-(imidazol-4-yl)glycerol 3-phosphate = 3-(imidazol-4-yl)-2-oxopropyl phosphate + H2O. Its pathway is amino-acid biosynthesis; L-histidine biosynthesis; L-histidine from 5-phospho-alpha-D-ribose 1-diphosphate: step 6/9. The protein is Imidazoleglycerol-phosphate dehydratase of Mycolicibacterium gilvum (strain PYR-GCK) (Mycobacterium gilvum (strain PYR-GCK)).